An 89-amino-acid chain; its full sequence is Cell division topological specificity factor (89 aa).

The protein belongs to the MinE family.

Functionally, prevents the cell division inhibition by proteins MinC and MinD at internal division sites while permitting inhibition at polar sites. This ensures cell division at the proper site by restricting the formation of a division septum at the midpoint of the long axis of the cell. The chain is Cell division topological specificity factor from Pectobacterium carotovorum subsp. carotovorum (strain PC1).